The chain runs to 155 residues: 6,7-dimethyl-8-ribityllumazine synthase (155 aa).

5-amino-6-(D-ribitylamino)uracil is bound by residues Phe23, 57-59, and 81-83; these read AFE and AVI. Residue 86 to 87 coordinates (2S)-2-hydroxy-3-oxobutyl phosphate; the sequence is ST. His89 functions as the Proton donor in the catalytic mechanism. 5-amino-6-(D-ribitylamino)uracil is bound at residue Phe114. A (2S)-2-hydroxy-3-oxobutyl phosphate-binding site is contributed by Arg128.

Belongs to the DMRL synthase family.

The catalysed reaction is (2S)-2-hydroxy-3-oxobutyl phosphate + 5-amino-6-(D-ribitylamino)uracil = 6,7-dimethyl-8-(1-D-ribityl)lumazine + phosphate + 2 H2O + H(+). The protein operates within cofactor biosynthesis; riboflavin biosynthesis; riboflavin from 2-hydroxy-3-oxobutyl phosphate and 5-amino-6-(D-ribitylamino)uracil: step 1/2. In terms of biological role, catalyzes the formation of 6,7-dimethyl-8-ribityllumazine by condensation of 5-amino-6-(D-ribitylamino)uracil with 3,4-dihydroxy-2-butanone 4-phosphate. This is the penultimate step in the biosynthesis of riboflavin. This chain is 6,7-dimethyl-8-ribityllumazine synthase, found in Pelobacter propionicus (strain DSM 2379 / NBRC 103807 / OttBd1).